A 343-amino-acid chain; its full sequence is DNA-directed RNA polymerase subunit alpha (343 aa).

The alpha N-terminal domain (alpha-NTD) stretch occupies residues 1 to 243; that stretch reads MTQEIDEKIP…EQLDIFINFD (243 aa). The interval 261 to 343 is alpha C-terminal domain (alpha-CTD); that stretch reads ENPYLDKPVE…NAPSDAETEE (83 aa).

The protein belongs to the RNA polymerase alpha chain family. As to quaternary structure, homodimer. The RNAP catalytic core consists of 2 alpha, 1 beta, 1 beta' and 1 omega subunit. When a sigma factor is associated with the core the holoenzyme is formed, which can initiate transcription.

It carries out the reaction RNA(n) + a ribonucleoside 5'-triphosphate = RNA(n+1) + diphosphate. Functionally, DNA-dependent RNA polymerase catalyzes the transcription of DNA into RNA using the four ribonucleoside triphosphates as substrates. This chain is DNA-directed RNA polymerase subunit alpha, found in Desulfotalea psychrophila (strain LSv54 / DSM 12343).